The sequence spans 753 residues: 5-methyltetrahydropteroyltriglutamate--homocysteine methyltransferase (753 aa).

5-methyltetrahydropteroyltri-L-glutamate is bound by residues arginine 17–lysine 20 and lysine 117. Residues isoleucine 431–serine 433 and glutamate 484 contribute to the L-homocysteine site. L-methionine contacts are provided by residues isoleucine 431–serine 433 and glutamate 484. 5-methyltetrahydropteroyltri-L-glutamate is bound by residues arginine 515 to cysteine 516 and tryptophan 561. Aspartate 599 serves as a coordination point for L-homocysteine. Aspartate 599 contributes to the L-methionine binding site. Glutamate 605 serves as a coordination point for 5-methyltetrahydropteroyltri-L-glutamate. Residues histidine 641, cysteine 643, and glutamate 665 each coordinate Zn(2+). The active-site Proton donor is histidine 694. Cysteine 726 contributes to the Zn(2+) binding site.

It belongs to the vitamin-B12 independent methionine synthase family. Requires Zn(2+) as cofactor.

The catalysed reaction is 5-methyltetrahydropteroyltri-L-glutamate + L-homocysteine = tetrahydropteroyltri-L-glutamate + L-methionine. Its pathway is amino-acid biosynthesis; L-methionine biosynthesis via de novo pathway; L-methionine from L-homocysteine (MetE route): step 1/1. Its function is as follows. Catalyzes the transfer of a methyl group from 5-methyltetrahydrofolate to homocysteine resulting in methionine formation. In Escherichia coli O7:K1 (strain IAI39 / ExPEC), this protein is 5-methyltetrahydropteroyltriglutamate--homocysteine methyltransferase.